The following is a 245-amino-acid chain: 1-(5-phosphoribosyl)-5-[(5-phosphoribosylamino)methylideneamino] imidazole-4-carboxamide isomerase (245 aa).

The active-site Proton acceptor is the aspartate 8. The active-site Proton donor is the aspartate 130.

This sequence belongs to the HisA/HisF family.

It localises to the cytoplasm. It carries out the reaction 1-(5-phospho-beta-D-ribosyl)-5-[(5-phospho-beta-D-ribosylamino)methylideneamino]imidazole-4-carboxamide = 5-[(5-phospho-1-deoxy-D-ribulos-1-ylimino)methylamino]-1-(5-phospho-beta-D-ribosyl)imidazole-4-carboxamide. It functions in the pathway amino-acid biosynthesis; L-histidine biosynthesis; L-histidine from 5-phospho-alpha-D-ribose 1-diphosphate: step 4/9. In Pseudomonas putida (strain ATCC 700007 / DSM 6899 / JCM 31910 / BCRC 17059 / LMG 24140 / F1), this protein is 1-(5-phosphoribosyl)-5-[(5-phosphoribosylamino)methylideneamino] imidazole-4-carboxamide isomerase.